The following is a 235-amino-acid chain: Secretory carrier-associated membrane protein 5A (235 aa).

At 1 to 39 (MSDKPNNFPPLPRFIPLKPCFYQDFDTDIPDLHRTTAKR) the chain is on the cytoplasmic side. Residues 40-60 (LYYLWMLNSITLGVNLIGCLA) form a helical membrane-spanning segment. Topologically, residues 61-67 (WLIGGGS) are extracellular. Residues 68-88 (ATNFGLAFLWLILFTPCSYVC) traverse the membrane as a helical segment. The Cytoplasmic portion of the chain corresponds to 89-102 (WFRPIYKAFKTDSS). Residues 103–125 (FNFMAFFFTFTAQLVISIIQAVG) traverse the membrane as a helical segment. The Extracellular segment spans residues 126–148 (IPGWGVCGWIASISFFGTNVGSA). The chain crosses the membrane as a helical span at residues 149-169 (VVMLIPTIMFTAVAVLSFVAL). The Cytoplasmic portion of the chain corresponds to 170–235 (TKVHRFYRGA…TPNYGYSNEM (66 aa)).

Belongs to the SCAMP family. SCAMP5 subfamily.

Its subcellular location is the cell membrane. It is found in the golgi apparatus membrane. The protein resides in the golgi apparatus. The protein localises to the trans-Golgi network membrane. It localises to the recycling endosome membrane. Its subcellular location is the cytoplasmic vesicle. It is found in the secretory vesicle. The protein resides in the synaptic vesicle membrane. Its function is as follows. Required for the calcium-dependent exocytosis of signal sequence-containing cytokines. Probably acts in cooperation with the SNARE machinery. This chain is Secretory carrier-associated membrane protein 5A (scamp5-a), found in Xenopus laevis (African clawed frog).